The sequence spans 598 residues: Thiamine transporter (598 aa).

At 1-41 (MSFGSKVSRALRFLEIPVKDRASVSFLKNPDLQPIKSANQT) the chain is on the cytoplasmic side. A helical membrane pass occupies residues 42–62 (WGFWSNFAYWGVMSFSVGTWM). Residues 63-73 (SASSALGVGLS) lie on the Extracellular side of the membrane. The chain crosses the membrane as a helical span at residues 74 to 94 (YPETIGTFIVGDVLTIIFTLA). Residues 95 to 111 (NSCPGYDWKVGFTLAQR) are Cytoplasmic-facing. The chain crosses the membrane as a helical span at residues 112–132 (FVFGIYGSAFGIIIRILMSIV). The Extracellular segment spans residues 133-173 (NYGSNAWVGGLCINMILDSWSHHYLHLPNTLSSKVAMTTKE). A helical transmembrane segment spans residues 174 to 194 (LIGFIIFHVLTAFCYLMKPYH). The Cytoplasmic segment spans residues 195-197 (MNY). A helical transmembrane segment spans residues 198-218 (ILIWSCVATFFSMLGMVIYLA). At 219-240 (KQAHGVGELFTSTKSTATGSTK) the chain is on the extracellular side. Residues 241–261 (AWAWVYMISYWFGSVSPGSTN) traverse the membrane as a helical segment. Over 262-274 (QSDYSRFGSSNWA) the chain is Cytoplasmic. A helical membrane pass occupies residues 275 to 295 (IWAGTICALLIPTTLIPVFGV). Residues 296–332 (IGASTCDKLYGEQYWMPMDIFNHWLTTNYSAGARAGA) are Extracellular-facing. The chain crosses the membrane as a helical span at residues 333–353 (FFCGLSFVLSQMSYTISNCGF). The Cytoplasmic portion of the chain corresponds to 354 to 371 (ASGMDLAGLLPKYVDIKR). A helical transmembrane segment spans residues 372-392 (GALFAACVSWACLPWNFYNSS). The Extracellular portion of the chain corresponds to 393-394 (ST). Residues 395-415 (FLTVMSSFGVVMTPIISVMIC) form a helical membrane-spanning segment. Topologically, residues 416-446 (DNFLIRKRQYSITNAFILKGEYYFTKGVNWR) are cytoplasmic. Residues 447–467 (AIVAWVCGMTPGLPGIAWEVN) form a helical membrane-spanning segment. At 468–483 (NDYFHNTGIVNFFYGD) the chain is on the extracellular side. The chain crosses the membrane as a helical span at residues 484–504 (SFFSFLISFFVYWGLCLLFPF). Over 505–598 (KITVKHDDKD…QSSTASEKAA (94 aa)) the chain is Cytoplasmic. Phosphoserine is present on serine 560. Residues 574 to 598 (NTNEFEIVHHKNNEKQSSTASEKAA) form a disordered region. The span at 588 to 598 (KQSSTASEKAA) shows a compositional bias: polar residues.

The protein belongs to the purine-cytosine permease (2.A.39) family.

It is found in the membrane. Its function is as follows. Responsible for intake of thiamine. In Saccharomyces cerevisiae (strain ATCC 204508 / S288c) (Baker's yeast), this protein is Thiamine transporter (THI7).